Here is a 304-residue protein sequence, read N- to C-terminus: UTP--glucose-1-phosphate uridylyltransferase 1 (304 aa).

It belongs to the UDPGP type 2 family.

It catalyses the reaction alpha-D-glucose 1-phosphate + UTP + H(+) = UDP-alpha-D-glucose + diphosphate. Its pathway is carbohydrate metabolism; nucleotide-sugar metabolism. The polypeptide is UTP--glucose-1-phosphate uridylyltransferase 1 (hasC1) (Streptococcus pyogenes serotype M1).